Reading from the N-terminus, the 137-residue chain is Protein apnoia (137 aa).

3 consecutive transmembrane segments (helical) span residues 7–27 (IVFA…QQQA), 55–75 (LVPG…LTVV), and 76–96 (SIKG…QMLS).

In terms of assembly, interacts with crb.

Its subcellular location is the apical cell membrane. In terms of biological role, transmembrane protein that plays a key role in trachea development by regulating crb localization and maintenance at the apical cell membrane. Required for anisotropic apical surface expansion important for tracheal tube elongation and lumen stability at larval stages. The sequence is that of Protein apnoia from Drosophila melanogaster (Fruit fly).